The primary structure comprises 138 residues: Membrane glycoprotein UL139 (138 aa).

Residues 1-15 form the signal peptide; sequence MLWILVLFALAASAS. The interval 17 to 37 is disordered; sequence TTTGTSSNSSQSTSAGTTNTT. A helical transmembrane segment spans residues 64–84; it reads GWTLSGLLLIFTCCLCCFWLV. Positions 113–129 are enriched in polar residues; the sequence is SDATLPMGTTGSYTPPQ. A disordered region spans residues 113–138; sequence SDATLPMGTTGSYTPPQDGSFPPPPR.

It is found in the host membrane. This chain is Membrane glycoprotein UL139 (UL139), found in Homo sapiens (Human).